The following is a 38-amino-acid chain: Potassium channel toxin alpha-KTx 2.13 (38 aa).

3 disulfides stabilise this stretch: cysteine 7–cysteine 29, cysteine 13–cysteine 34, and cysteine 17–cysteine 36.

The protein belongs to the short scorpion toxin superfamily. Potassium channel inhibitor family. Alpha-KTx 02 subfamily. In terms of tissue distribution, expressed by the venom gland.

The protein localises to the secreted. In terms of biological role, selective inhibitor of voltage-gated potassium channels, blocks the Kv1.2/KCNA2 (Kd=1.3 nM) and Kv1.3/KCNA3 (Kd=7.2 nM) channels. Association and dissociation rates of the toxin are slower for Kv1.2/KCNA2 than for Kv1.3/KCNA3. In Centruroides suffusus (Durango bark scorpion), this protein is Potassium channel toxin alpha-KTx 2.13.